We begin with the raw amino-acid sequence, 293 residues long: Pyridoxal 5'-phosphate synthase subunit PdxS (293 aa).

Asp23 serves as a coordination point for D-ribose 5-phosphate. Catalysis depends on Lys80, which acts as the Schiff-base intermediate with D-ribose 5-phosphate. Gly152 serves as a coordination point for D-ribose 5-phosphate. Residue Arg164 participates in D-glyceraldehyde 3-phosphate binding. D-ribose 5-phosphate-binding positions include Gly213 and 234–235 (GS).

Belongs to the PdxS/SNZ family. As to quaternary structure, in the presence of PdxT, forms a dodecamer of heterodimers.

It catalyses the reaction aldehydo-D-ribose 5-phosphate + D-glyceraldehyde 3-phosphate + L-glutamine = pyridoxal 5'-phosphate + L-glutamate + phosphate + 3 H2O + H(+). It participates in cofactor biosynthesis; pyridoxal 5'-phosphate biosynthesis. Its function is as follows. Catalyzes the formation of pyridoxal 5'-phosphate from ribose 5-phosphate (RBP), glyceraldehyde 3-phosphate (G3P) and ammonia. The ammonia is provided by the PdxT subunit. Can also use ribulose 5-phosphate and dihydroxyacetone phosphate as substrates, resulting from enzyme-catalyzed isomerization of RBP and G3P, respectively. The chain is Pyridoxal 5'-phosphate synthase subunit PdxS from Herpetosiphon aurantiacus (strain ATCC 23779 / DSM 785 / 114-95).